Consider the following 228-residue polypeptide: Methyltransferase verB (228 aa).

It belongs to the methyltransferase superfamily.

Its pathway is secondary metabolite biosynthesis; terpenoid biosynthesis. The protein operates within mycotoxin biosynthesis. Methyltransferase; part of the gene cluster that mediates the biosynthesis of the neurotoxin verrucosidin, a methylated alpha-pyrone polyketide that inhibits oxidative phosphorylation in mitochondria and thereby causes neurological diseases. The carbon backbone of verrucosidin is synthesized by the HR-PKS verA, and further modified by the other verrucodidin cluster enzymes. In Penicillium polonicum, this protein is Methyltransferase verB.